The sequence spans 107 residues: Anti-adapter protein IraM (107 aa).

The protein belongs to the IraM/RssC family.

It localises to the cytoplasm. Functionally, inhibits RpoS proteolysis by regulating RssB activity, thereby increasing the stability of the sigma stress factor RpoS during magnesium starvation. This is Anti-adapter protein IraM from Shigella sonnei (strain Ss046).